The chain runs to 239 residues: Putative antitoxin VapB45 (239 aa).

In terms of biological role, possibly the antitoxin component of a type II toxin-antitoxin (TA) system. Its cognate toxin is VapC45. The protein is Putative antitoxin VapB45 of Mycobacterium tuberculosis (strain ATCC 25618 / H37Rv).